An 801-amino-acid polypeptide reads, in one-letter code: Protein 4.1 (801 aa).

The interval 1 to 187 (MTTEKGLLAE…GESKASHKVV (187 aa)) is disordered. Residues 45–58 (EQSQESPSTTSPST) are compositionally biased toward low complexity. Positions 88–107 (SDEKEVELLGEKGQDQKDVD) are enriched in basic and acidic residues. The span at 108–117 (EGLGEQLEDD) shows a compositional bias: acidic residues. Over residues 141–151 (SLSSAETQPAQ) the composition is skewed to polar residues. Over residues 154-166 (QKEDQDPEADCED) the composition is skewed to acidic residues. The span at 167 to 182 (VEGKEPIKKPEGESKA) shows a compositional bias: basic and acidic residues. In terms of domain architecture, FERM spans 193-474 (MRCKVTLLDD…EHHTFFRLTS (282 aa)). The interval 477–587 (SIPKHRFLSL…GMPNQRESPK (111 aa)) is hydrophilic. The disordered stretch occupies residues 516 to 613 (RTGSKRASRS…DKVKDLEKTQ (98 aa)). A compositionally biased stretch (basic and acidic residues) spans 563–577 (RVEEMPKKTEEKPKE). The spectrin--actin-binding stretch occupies residues 588 to 651 (DVKATQQDSP…WDKRLSTHSP (64 aa)). Over residues 591 to 601 (ATQQDSPSPTV) the composition is skewed to polar residues. Residues 604–613 (DKVKDLEKTQ) are compositionally biased toward basic and acidic residues. The tract at residues 653 to 801 (RTLSFNGQVQ…GVVHQETEIA (149 aa)) is C-terminal (CTD).

Binds with a high affinity to glycophorin and with lower affinity to band III protein. Associates with the nuclear mitotic apparatus. Binds calmodulin. Phosphorylated at multiple sites by different protein kinases and each phosphorylation event selectively modulates the protein's functions. As to expression, found exclusively in photoreceptors following the terminal mitosis of retinal neurons. When retinal synaptogenesis is complete, protein 4.1 is also expressed in the inner retina. In adult amphibian retinas, protein 4.1 is detected in photoreceptors, bipolar cells, and ganglion cell axons.

Its subcellular location is the nucleus. It is found in the cytoplasm. The protein resides in the cytoskeleton. It localises to the cell cortex. In terms of biological role, protein 4.1 is a major structural element of the erythrocyte membrane skeleton. It plays a key role in regulating membrane physical properties of mechanical stability and deformability by stabilizing spectrin-actin interaction. May be required for dynein-dynactin complex and NUMA1 recruitment at the mitotic cell cortex during anaphase. In Xenopus laevis (African clawed frog), this protein is Protein 4.1.